We begin with the raw amino-acid sequence, 132 residues long: Small ribosomal subunit protein uS8 (132 aa).

This sequence belongs to the universal ribosomal protein uS8 family. As to quaternary structure, part of the 30S ribosomal subunit. Contacts proteins S5 and S12.

Functionally, one of the primary rRNA binding proteins, it binds directly to 16S rRNA central domain where it helps coordinate assembly of the platform of the 30S subunit. In Streptococcus agalactiae serotype V (strain ATCC BAA-611 / 2603 V/R), this protein is Small ribosomal subunit protein uS8.